The primary structure comprises 223 residues: Endonuclease V (223 aa).

The Mg(2+) site is built by D35 and D103.

The protein belongs to the endonuclease V family. The cofactor is Mg(2+).

It is found in the cytoplasm. The catalysed reaction is Endonucleolytic cleavage at apurinic or apyrimidinic sites to products with a 5'-phosphate.. In terms of biological role, DNA repair enzyme involved in the repair of deaminated bases. Selectively cleaves double-stranded DNA at the second phosphodiester bond 3' to a deoxyinosine leaving behind the intact lesion on the nicked DNA. In Salmonella paratyphi A (strain ATCC 9150 / SARB42), this protein is Endonuclease V.